The primary structure comprises 154 residues: MGLSDGEWQLVLTVWGKVEADLAGHGQEVLIRLFKNHPETLEKFDKFKNLKSEDEMKGSDDLKKHGNTVLSALGGILKKKGQHEAELKPLAQSHATKHKIPVKYLEFISEAIIQVLQSKHPGDFGADAQGAMSKALELFRNDMAAKYKELGFHG.

Residues 2 to 148 form the Globin domain; the sequence is GLSDGEWQLV…FRNDMAAKYK (147 aa). The residue at position 4 (Ser-4) is a Phosphoserine. His-65 contacts nitrite. His-65 contributes to the O2 binding site. At Thr-68 the chain carries Phosphothreonine. A heme b-binding site is contributed by His-94.

The protein belongs to the globin family. Monomeric.

Its subcellular location is the cytoplasm. It is found in the sarcoplasm. It catalyses the reaction Fe(III)-heme b-[protein] + nitric oxide + H2O = Fe(II)-heme b-[protein] + nitrite + 2 H(+). The catalysed reaction is H2O2 + AH2 = A + 2 H2O. Monomeric heme protein which primary function is to store oxygen and facilitate its diffusion within muscle tissues. Reversibly binds oxygen through a pentacoordinated heme iron and enables its timely and efficient release as needed during periods of heightened demand. Depending on the oxidative conditions of tissues and cells, and in addition to its ability to bind oxygen, it also has a nitrite reductase activity whereby it regulates the production of bioactive nitric oxide. Under stress conditions, like hypoxia and anoxia, it also protects cells against reactive oxygen species thanks to its pseudoperoxidase activity. This Ochotona curzoniae (Black-lipped pika) protein is Myoglobin (MB).